The sequence spans 610 residues: UvrABC system protein C (610 aa).

The region spanning 16 to 94 (SQPGVYRMYD…IQRYQPRYNV (79 aa)) is the GIY-YIG domain. The UVR domain maps to 204–239 (SQVIEGLIKRMEEASQALRFEEAARIRDQIHAVRQV).

Belongs to the UvrC family. In terms of assembly, interacts with UvrB in an incision complex.

Its subcellular location is the cytoplasm. Functionally, the UvrABC repair system catalyzes the recognition and processing of DNA lesions. UvrC both incises the 5' and 3' sides of the lesion. The N-terminal half is responsible for the 3' incision and the C-terminal half is responsible for the 5' incision. In Proteus mirabilis (strain HI4320), this protein is UvrABC system protein C.